The following is a 722-amino-acid chain: Glycine--tRNA ligase beta subunit (722 aa).

The protein belongs to the class-II aminoacyl-tRNA synthetase family. Tetramer of two alpha and two beta subunits.

It localises to the cytoplasm. It carries out the reaction tRNA(Gly) + glycine + ATP = glycyl-tRNA(Gly) + AMP + diphosphate. The sequence is that of Glycine--tRNA ligase beta subunit from Xylella fastidiosa (strain Temecula1 / ATCC 700964).